The primary structure comprises 212 residues: uncharacterized protein (212 aa).

This is an uncharacterized protein from Acanthamoeba polyphaga mimivirus (APMV).